A 151-amino-acid polypeptide reads, in one-letter code: 1,4-dihydroxy-2-naphthoyl-CoA hydrolase (151 aa).

D19 is an active-site residue.

The protein belongs to the 4-hydroxybenzoyl-CoA thioesterase family. DHNA-CoA hydrolase subfamily.

It catalyses the reaction 1,4-dihydroxy-2-naphthoyl-CoA + H2O = 1,4-dihydroxy-2-naphthoate + CoA + H(+). It functions in the pathway cofactor biosynthesis; phylloquinone biosynthesis. The protein operates within quinol/quinone metabolism; 1,4-dihydroxy-2-naphthoate biosynthesis; 1,4-dihydroxy-2-naphthoate from chorismate: step 7/7. Functionally, catalyzes the hydrolysis of 1,4-dihydroxy-2-naphthoyl-CoA (DHNA-CoA) to 1,4-dihydroxy-2-naphthoate (DHNA), a reaction involved in phylloquinone (vitamin K1) biosynthesis. This is 1,4-dihydroxy-2-naphthoyl-CoA hydrolase from Prochlorococcus marinus (strain MIT 9303).